Consider the following 192-residue polypeptide: Adenylate kinase (192 aa).

Residue 10–18 (GVPGVGSTT) coordinates ATP.

The protein belongs to the archaeal adenylate kinase family. As to quaternary structure, monomer.

The protein resides in the cytoplasm. The catalysed reaction is AMP + ATP = 2 ADP. The sequence is that of Adenylate kinase (adkA) from Methanococcus voltae.